The primary structure comprises 551 residues: (6-4)DNA photolyase (551 aa).

Residues A13 to L157 enclose the Photolyase/cryptochrome alpha/beta domain. E254 serves as a coordination point for phosphate. FAD contacts are provided by residues K255, T268–S272, Q309–R313, W372–H375, R378, D407–D409, and N413. A DNA-binding site is contributed by W312. An interaction with DNA region spans residues H374–H379. W419 is a binding site for DNA. Positions Y508–S551 are disordered. Positions R512–K522 are enriched in basic and acidic residues. The span at A533–T544 shows a compositional bias: polar residues.

It belongs to the DNA photolyase class-1 family. FAD serves as cofactor.

The catalysed reaction is (6-4) photoproduct (in DNA) = 2 pyrimidine residues (in DNA).. In terms of biological role, involved in repair of UV radiation-induced DNA damage. Catalyzes the photoreactivation of pyrimidine [6-4] pyrimidone photoproduct (6-4 products). The polypeptide is (6-4)DNA photolyase (UVR3) (Oryza sativa subsp. japonica (Rice)).